The primary structure comprises 360 residues: SPRY domain-containing SOCS box protein 3 (360 aa).

The interval 21 to 54 is disordered; it reads DQDGRSPALHAEEEAWGYDSDGQHSNSDSDTDLL. Residues 84 to 274 enclose the B30.2/SPRY domain; that stretch reads SLHPFRQIKS…MKVIRSCCCR (191 aa). In terms of domain architecture, SOCS box spans 264–315; sequence SMKVIRSCCCRTSLQYLCCARLRQLLPGSVDSLEVLPLPPGLKQVLSNKLGW. Residues 322–350 form a disordered region; sequence NRSSQHKGDGSATTSCGSYSDSSCTPGHD. Over residues 332-346 the composition is skewed to polar residues; sequence SATTSCGSYSDSSCT.

Belongs to the SPSB family. In terms of assembly, substrate-recognition component of the ECS(SPSB3) complex, composed of spsb3, cul5, elob, elob and rnf7/rbx2.

The protein resides in the nucleus. The protein operates within protein modification; protein ubiquitination. Substrate-recognition component of a cullin-5-RING E3 ubiquitin-protein ligase complex (ECS complex, also named CRL5 complex), which mediates the ubiquitination and subsequent proteasomal degradation of target proteins. The chain is SPRY domain-containing SOCS box protein 3 (spsb3) from Xenopus laevis (African clawed frog).